The sequence spans 243 residues: MSESYAKIARDGLWDKNIVTGQMLALCPTLAITGTATNGLGMGLATTVVLILSNVVISALRKTIAPEIRIPAFILIIAAIVTVVDLALNAWLHDLHKVLGLFIALIVTNCAILGRAEAFASRFGVLASALDGLMMGIGFTLALVVVGAIREILGSGTLFAQASLLLGPHFAFMELQIFPDYPGFLIMILPPGGFLVVGGLFALKRIIDARKPTIEQEIKQMRTERVFTAAGVLKPKLETGEEA.

6 helical membrane-spanning segments follow: residues 40-60, 72-92, 94-114, 129-149, 152-172, and 183-203; these read LGMGLATTVVLILSNVVISAL, AFILIIAAIVTVVDLALNAWL, DLHKVLGLFIALIVTNCAILG, ALDGLMMGIGFTLALVVVGAI, ILGSGTLFAQASLLLGPHFAF, and GFLIMILPPGGFLVVGGLFAL.

It belongs to the NqrDE/RnfAE family. As to quaternary structure, the complex is composed of six subunits: RnfA, RnfB, RnfC, RnfD, RnfE and RnfG.

It localises to the cellular chromatophore membrane. Part of a membrane-bound complex that couples electron transfer with translocation of ions across the membrane. Required for nitrogen fixation. Involved in electron transfer to nitrogenase. The polypeptide is Ion-translocating oxidoreductase complex subunit E (Rhodobacter capsulatus (Rhodopseudomonas capsulata)).